The sequence spans 504 residues: Putative BTB/POZ domain-containing protein R842 (504 aa).

Residues 21–91 (SDVKLILKDN…FYGFKSPSVT (71 aa)) enclose the BTB domain.

The protein belongs to the mimivirus BTB/WD family.

The polypeptide is Putative BTB/POZ domain-containing protein R842 (Acanthamoeba polyphaga (Amoeba)).